Here is a 541-residue protein sequence, read N- to C-terminus: Tripeptidyl aminopeptidase (541 aa).

The signal sequence occupies residues 1-36 (MRKSSIRRRATAFGTAGALVTATLIAGAVSAPAASA). Residues 37–39 (APA) constitute a propeptide that is removed on maturation. The AB hydrolase-1 domain occupies 123 to 501 (GALIYNPGGP…SRLITERDAG (379 aa)). Ser-249 acts as the Nucleophile in catalysis. Asp-474 is a catalytic residue. The active-site Proton donor is the His-503.

Belongs to the peptidase S33 family.

Its subcellular location is the secreted. Cleaves tripeptides from the N-termini of proteins. Does not cleave mono- or dipeptides, or N-terminally blocked peptides. This chain is Tripeptidyl aminopeptidase, found in Streptomyces coelicolor (strain ATCC BAA-471 / A3(2) / M145).